Consider the following 276-residue polypeptide: Outer plastidial membrane protein porin (276 aa).

Belongs to the eukaryotic mitochondrial porin (TC 1.B.8.1) family.

It localises to the plastid outer membrane. Its function is as follows. Forms a channel through the cell membrane that allows diffusion of small hydrophilic molecules. The channel adopts an open conformation at low or zero membrane potential and a closed conformation at potentials above 30-40 mV. The open state has a weak anion selectivity whereas the closed state is cation-selective. The polypeptide is Outer plastidial membrane protein porin (POR1) (Pisum sativum (Garden pea)).